The chain runs to 74 residues: Protein SlyX homolog (74 aa).

Belongs to the SlyX family.

The sequence is that of Protein SlyX homolog from Aliivibrio salmonicida (strain LFI1238) (Vibrio salmonicida (strain LFI1238)).